The sequence spans 327 residues: Ribosomal RNA large subunit methyltransferase F (327 aa).

The tract at residues 1–24 is disordered; sequence MPRKTSSQPRPAEPKAVLHPRNRH.

This sequence belongs to the methyltransferase superfamily. METTL16/RlmF family.

It is found in the cytoplasm. The catalysed reaction is adenosine(1618) in 23S rRNA + S-adenosyl-L-methionine = N(6)-methyladenosine(1618) in 23S rRNA + S-adenosyl-L-homocysteine + H(+). Its function is as follows. Specifically methylates the adenine in position 1618 of 23S rRNA. The sequence is that of Ribosomal RNA large subunit methyltransferase F from Stutzerimonas stutzeri (strain A1501) (Pseudomonas stutzeri).